A 304-amino-acid polypeptide reads, in one-letter code: Putative S-adenosyl-L-methionine-dependent methyltransferase Mjls_1071 (304 aa).

S-adenosyl-L-methionine-binding positions include aspartate 130 and 159–160 (DL).

It belongs to the UPF0677 family.

Its function is as follows. Exhibits S-adenosyl-L-methionine-dependent methyltransferase activity. The chain is Putative S-adenosyl-L-methionine-dependent methyltransferase Mjls_1071 from Mycobacterium sp. (strain JLS).